A 372-amino-acid chain; its full sequence is ATP phosphoribosyltransferase regulatory subunit (372 aa).

The protein belongs to the class-II aminoacyl-tRNA synthetase family. HisZ subfamily. As to quaternary structure, heteromultimer composed of HisG and HisZ subunits.

Its subcellular location is the cytoplasm. It participates in amino-acid biosynthesis; L-histidine biosynthesis; L-histidine from 5-phospho-alpha-D-ribose 1-diphosphate: step 1/9. Its function is as follows. Required for the first step of histidine biosynthesis. May allow the feedback regulation of ATP phosphoribosyltransferase activity by histidine. The protein is ATP phosphoribosyltransferase regulatory subunit of Rhizobium rhizogenes (strain K84 / ATCC BAA-868) (Agrobacterium radiobacter).